The sequence spans 124 residues: MNHPSELKYARTHEWVKIEGDLVITGITDHAQDELGDLVYVETPEVGSQVTAGEQAGVVESVKTASDIHAPVSGTVVEVNTDLEDDPDFVNEDPYGKGWIYKIKPDNIADVEKLLTNAEYEAGL.

The Lipoyl-binding domain occupies 22–104 (LVITGITDHA…YGKGWIYKIK (83 aa)). K63 is subject to N6-lipoyllysine.

Belongs to the GcvH family. The glycine cleavage system is composed of four proteins: P, T, L and H. The cofactor is (R)-lipoate.

Its function is as follows. The glycine cleavage system catalyzes the degradation of glycine. The H protein shuttles the methylamine group of glycine from the P protein to the T protein. In Acinetobacter baumannii (strain ACICU), this protein is Glycine cleavage system H protein.